The sequence spans 290 residues: ATP synthase gamma chain (290 aa).

Belongs to the ATPase gamma chain family. F-type ATPases have 2 components, CF(1) - the catalytic core - and CF(0) - the membrane proton channel. CF(1) has five subunits: alpha(3), beta(3), gamma(1), delta(1), epsilon(1). CF(0) has three main subunits: a, b and c.

The protein resides in the cell inner membrane. In terms of biological role, produces ATP from ADP in the presence of a proton gradient across the membrane. The gamma chain is believed to be important in regulating ATPase activity and the flow of protons through the CF(0) complex. The polypeptide is ATP synthase gamma chain (Thiobacillus denitrificans (strain ATCC 25259 / T1)).